The chain runs to 205 residues: N-(5'-phosphoribosyl)anthranilate isomerase (205 aa).

It belongs to the TrpF family.

It catalyses the reaction N-(5-phospho-beta-D-ribosyl)anthranilate = 1-(2-carboxyphenylamino)-1-deoxy-D-ribulose 5-phosphate. The protein operates within amino-acid biosynthesis; L-tryptophan biosynthesis; L-tryptophan from chorismate: step 3/5. This chain is N-(5'-phosphoribosyl)anthranilate isomerase, found in Marinomonas sp. (strain MWYL1).